The sequence spans 177 residues: Large ribosomal subunit protein uL6 (177 aa).

This sequence belongs to the universal ribosomal protein uL6 family. In terms of assembly, part of the 50S ribosomal subunit.

Its function is as follows. This protein binds to the 23S rRNA, and is important in its secondary structure. It is located near the subunit interface in the base of the L7/L12 stalk, and near the tRNA binding site of the peptidyltransferase center. The chain is Large ribosomal subunit protein uL6 from Rickettsia canadensis (strain McKiel).